The following is a 540-amino-acid chain: GMP synthase [glutamine-hydrolyzing] (540 aa).

Residues 26-216 (LIIILDFGSQ…VYHICDCEPT (191 aa)) form the Glutamine amidotransferase type-1 domain. C103 (nucleophile) is an active-site residue. Residues H190 and E192 contribute to the active site. The GMPS ATP-PPase domain occupies 217-415 (WTTAAFVEEA…IGLPEEIVQR (199 aa)). Position 244-250 (244-250 (SGGVDSS)) interacts with ATP.

In terms of assembly, homodimer.

It catalyses the reaction XMP + L-glutamine + ATP + H2O = GMP + L-glutamate + AMP + diphosphate + 2 H(+). Its pathway is purine metabolism; GMP biosynthesis; GMP from XMP (L-Gln route): step 1/1. Functionally, catalyzes the synthesis of GMP from XMP. The sequence is that of GMP synthase [glutamine-hydrolyzing] from Nostoc punctiforme (strain ATCC 29133 / PCC 73102).